A 152-amino-acid polypeptide reads, in one-letter code: Large ribosomal subunit protein bL9 (152 aa).

Belongs to the bacterial ribosomal protein bL9 family.

Functionally, binds to the 23S rRNA. The chain is Large ribosomal subunit protein bL9 from Prochlorococcus marinus (strain MIT 9211).